The following is a 47-amino-acid chain: Large ribosomal subunit protein eL40 (47 aa).

This sequence belongs to the eukaryotic ribosomal protein eL40 family.

The sequence is that of Large ribosomal subunit protein eL40 from Methanococcus aeolicus (strain ATCC BAA-1280 / DSM 17508 / OCM 812 / Nankai-3).